Reading from the N-terminus, the 699-residue chain is Fervidolysin (699 aa).

The signal sequence occupies residues 1–21 (MRKVLLIASIVALILALFSCA). Positions 22-149 (NPSFEPRSKA…MYKIRKPGLN (128 aa)) are excised as a propeptide. Residue Glu-157 participates in Ca(2+) binding. Residues 163 to 465 (LWGLEAIGVT…YGLVKLDAAL (303 aa)) form the Peptidase S8 domain. Asp-190 serves as the catalytic Charge relay system. Residue Asp-199 coordinates Ca(2+). His-228 acts as the Charge relay system in catalysis. Positions 239, 241, 243, and 245 each coordinate Ca(2+). Ser-409 acts as the Charge relay system in catalysis.

This sequence belongs to the peptidase S8 family. Post-translationally, undergoes auto-proteolytic processing. Once cleaved, the propeptide can remain associated with the protease and blocks its activity. The physiological activation of fervidolysin is proposed to be achieved through the stepwise removal of the propeptide accomplished by several proteolytic cleavages that may not be autolytic.

The protein resides in the cell surface. With respect to regulation, is inhibited by phenylmethylsulfonyl fluoride and 3,4-dichloroisocoumarin. EDTA and iodoacetate (1 to 5 mM) have only little effect on the enzyme activity. Its function is as follows. Protease able to degrade keratin into peptides. Is responsible for keratinolysis by F.pennivorans, which allows this bacterium to grow on native feathers. This Fervidobacterium pennivorans protein is Fervidolysin.